Reading from the N-terminus, the 474-residue chain is Probable cytosol aminopeptidase (474 aa).

Mn(2+) is bound by residues K237 and D242. The active site involves K249. 3 residues coordinate Mn(2+): D260, D319, and E321. R323 is an active-site residue.

The protein belongs to the peptidase M17 family. Mn(2+) serves as cofactor.

Its subcellular location is the cytoplasm. The catalysed reaction is Release of an N-terminal amino acid, Xaa-|-Yaa-, in which Xaa is preferably Leu, but may be other amino acids including Pro although not Arg or Lys, and Yaa may be Pro. Amino acid amides and methyl esters are also readily hydrolyzed, but rates on arylamides are exceedingly low.. The enzyme catalyses Release of an N-terminal amino acid, preferentially leucine, but not glutamic or aspartic acids.. Presumably involved in the processing and regular turnover of intracellular proteins. Catalyzes the removal of unsubstituted N-terminal amino acids from various peptides. This is Probable cytosol aminopeptidase from Helicobacter hepaticus (strain ATCC 51449 / 3B1).